The sequence spans 55 residues: Large ribosomal subunit protein bL33 (55 aa).

Residues 1–11 (MAKSGRDKIKL) are compositionally biased toward basic and acidic residues. The disordered stretch occupies residues 1-28 (MAKSGRDKIKLESTAGTGHFYTTTKNKR). Residues 14–24 (TAGTGHFYTTT) are compositionally biased toward polar residues.

It belongs to the bacterial ribosomal protein bL33 family.

This Janthinobacterium sp. (strain Marseille) (Minibacterium massiliensis) protein is Large ribosomal subunit protein bL33.